A 444-amino-acid chain; its full sequence is Tubulin beta chain (444 aa).

The GTP site is built by Q11, E69, S138, G142, T143, G144, N204, and N226. E69 contacts Mg(2+).

Belongs to the tubulin family. Dimer of alpha and beta chains. A typical microtubule is a hollow water-filled tube with an outer diameter of 25 nm and an inner diameter of 15 nM. Alpha-beta heterodimers associate head-to-tail to form protofilaments running lengthwise along the microtubule wall with the beta-tubulin subunit facing the microtubule plus end conferring a structural polarity. Microtubules usually have 13 protofilaments but different protofilament numbers can be found in some organisms and specialized cells. Mg(2+) is required as a cofactor.

Its subcellular location is the cytoplasm. It localises to the cytoskeleton. Tubulin is the major constituent of microtubules, a cylinder consisting of laterally associated linear protofilaments composed of alpha- and beta-tubulin heterodimers. Microtubules grow by the addition of GTP-tubulin dimers to the microtubule end, where a stabilizing cap forms. Below the cap, tubulin dimers are in GDP-bound state, owing to GTPase activity of alpha-tubulin. This chain is Tubulin beta chain, found in Euplotoides octocarinatus (Freshwater ciliate).